We begin with the raw amino-acid sequence, 373 residues long: MTFQFNFTIEDHLEDELTSLGDGALALHSSKESLVSERQKGTHRDKKCSTEQSDLLQDHLWEHKSERNEAPSQDPDSSFGAANSSSNLEPHEEKPCLKVAKEHAVPKDLKKVLENKVTETLPGLQHVNISIMKTTLLKENFPGENIISKSFSSHSDLISGVYEGGLKIWECTFDLLAYLTKAKVKFAGKKVLDLGCGSGLLGIMALKGGAKEIHFQDYNSVVIDEVTLPNVVANSTLEDEENDVNEPDVKRLRRSTVAQELCKCRFFSGEWSEFCKLVLSSEKLFEKYDLILTSETIYNPDYYVPLHQTFLRLLDKNGQVLLASKVHYFGVGGGTHLFQKFVEERNVFETRTLEIIDEGLKRCLIEMTFKYPT.

Residues 30-42 (SKESLVSERQKGT) are compositionally biased toward basic and acidic residues. 2 disordered regions span residues 30–52 (SKES…STEQ) and 64–94 (KSER…HEEK). The span at 70–88 (APSQDPDSSFGAANSSSNL) shows a compositional bias: polar residues. S72 and S77 each carry phosphoserine. H154 bears the Tele-methylhistidine mark. S-adenosyl-L-methionine contacts are provided by residues 168–172 (IWECT), G195, and 216–218 (QDY). Residues 247-253 (PDVKRLR) carry the Nuclear localization signal motif. S-adenosyl-L-methionine is bound by residues 269–271 (GEW) and S294.

The protein belongs to the methyltransferase superfamily. METTL18 family. Interacts with GRWD1 and members of the heat shock protein 90 and 70 families; these proteins may possibly be methylation substrates for the enzyme. Monomethylated at His-154 through automethylation. Automethylation at His-154 positively regulates the methyltransferase activity toward RPL3. Probably methylated on other residues.

Its subcellular location is the cytoplasm. The protein localises to the cytosol. The protein resides in the nucleus. It is found in the nucleolus. The catalysed reaction is L-histidyl-[protein] + S-adenosyl-L-methionine = N(tele)-methyl-L-histidyl-[protein] + S-adenosyl-L-homocysteine + H(+). Its function is as follows. Protein-L-histidine N-tele-methyltransferase that specifically monomethylates RPL3, thereby regulating translation elongation. Histidine methylation of RPL3 regulates translation elongation by slowing ribosome traversal on tyrosine codons: slower elongation provides enough time for proper folding of synthesized proteins and prevents cellular aggregation of tyrosine-rich proteins. The protein is Histidine protein methyltransferase 1 homolog (METTL18) of Bos taurus (Bovine).